The sequence spans 162 residues: Phosphopantetheine adenylyltransferase (162 aa).

Ser11 lines the substrate pocket. ATP contacts are provided by residues 11 to 12 and His19; that span reads SF. Residues Lys43, Val76, and Arg90 each contribute to the substrate site. Residues 91–93, Glu101, and 126–132 contribute to the ATP site; these read GLR and HLYISSS.

Belongs to the bacterial CoaD family. In terms of assembly, homohexamer. It depends on Mg(2+) as a cofactor.

The protein localises to the cytoplasm. It carries out the reaction (R)-4'-phosphopantetheine + ATP + H(+) = 3'-dephospho-CoA + diphosphate. Its pathway is cofactor biosynthesis; coenzyme A biosynthesis; CoA from (R)-pantothenate: step 4/5. Functionally, reversibly transfers an adenylyl group from ATP to 4'-phosphopantetheine, yielding dephospho-CoA (dPCoA) and pyrophosphate. This is Phosphopantetheine adenylyltransferase from Streptococcus pneumoniae (strain 70585).